The sequence spans 178 residues: Large ribosomal subunit protein uL6 (178 aa).

This sequence belongs to the universal ribosomal protein uL6 family. In terms of assembly, part of the 50S ribosomal subunit.

Functionally, this protein binds to the 23S rRNA, and is important in its secondary structure. It is located near the subunit interface in the base of the L7/L12 stalk, and near the tRNA binding site of the peptidyltransferase center. The chain is Large ribosomal subunit protein uL6 from Micrococcus luteus (Micrococcus lysodeikticus).